A 328-amino-acid polypeptide reads, in one-letter code: NAD(P)H-dependent pentose reductase (328 aa).

The Proton donor role is filled by tyrosine 50. A substrate-binding site is contributed by histidine 112. NAD(+)-binding positions include 174 to 175, 223 to 232, and 279 to 289; these read AN, SSFGPQSFVE, and KSNNVDRLKQN.

This sequence belongs to the aldo/keto reductase family.

Pentose reductase with a broad substrate affinity involved in pentose catabolism. Has highest reductase activities with L-arabinose and D-xylose as substrates, and displays much lower activities with D-ribose, D-galactose and D-glucose. Has highest dehydrogenase activity with L-arabitol as substrate, followed by xylitol and D-sorbitol. May be responsible for the first step of the L-arabinose catabolic pathway. This Pyricularia oryzae (strain 70-15 / ATCC MYA-4617 / FGSC 8958) (Rice blast fungus) protein is NAD(P)H-dependent pentose reductase (PRD1).